Reading from the N-terminus, the 483-residue chain is Cysteine proteinase 1, mitochondrial (483 aa).

The N-terminal 30 residues, 1-30, are a transit peptide targeting the mitochondrion; that stretch reads MLPTSVSRSLYLKTFRSHLLRAPQIVLKRM. Active-site residues include Cys-102, His-398, and Asn-421. Residue Lys-483 is a propeptide, removed in mature form; by autocatalysis.

It belongs to the peptidase C1 family. Homohexamer. Binds to nucleic acids. Binds single-stranded DNA and RNA with higher affinity than double-stranded DNA. The N-terminus of isoform Cytoplasmic is blocked.

The protein resides in the mitochondrion. Its subcellular location is the cytoplasm. The catalysed reaction is Inactivates bleomycin B2 (a cytotoxic glycometallopeptide) by hydrolysis of a carboxyamide bond of beta-aminoalanine, but also shows general aminopeptidase activity. The specificity varies somewhat with source, but amino acid arylamides of Met, Leu and Ala are preferred.. Its activity is regulated as follows. Inhibited by E64, a specific inhibitor of cysteine proteases, N-ethylmaleimide, iodacetamide, and mercury and zinc ions. The normal physiological role of the enzyme is unknown, but it is not essential for the viability of yeast cells. Has aminopeptidase activity, shortening substrate peptides sequentially by 1 amino acid. Has bleomycin hydrolase activity, which can protect the cell from the toxic effects of bleomycin. Has homocysteine-thiolactonase activity, protecting the cell against homocysteine toxicity. Acts as a repressor in the GAL4 regulatory system, but this does not require either the peptidase or nucleic acid-binding activities. This is Cysteine proteinase 1, mitochondrial (LAP3) from Saccharomyces cerevisiae (strain JAY291) (Baker's yeast).